Here is a 187-residue protein sequence, read N- to C-terminus: Corticoliberin (187 aa).

Residues 1–19 (MRLRLLVSAGMLLVALSSC) form the signal peptide. Positions 20–144 (LPCRALLSRG…HQGALERERR (125 aa)) are excised as a propeptide. Disordered regions lie at residues 75 to 94 (AARL…SRPS) and 114 to 146 (QRSL…RRSE). A compositionally biased stretch (basic and acidic residues) spans 117–129 (LDSRAEPAERGAE). Ile-185 is modified (isoleucine amide).

Belongs to the sauvagine/corticotropin-releasing factor/urotensin I family. In terms of assembly, interacts (via C-terminus) with CRFR1 (via N-terminal extracellular domain). As to expression, expressed in parvocellular paraventricular nucleus of the hypothalamus and in medial accessory olivary nucleus.

Its subcellular location is the secreted. Its function is as follows. Hormone regulating the release of corticotropin from pituitary gland. Induces NLRP6 in intestinal epithelial cells, hence may influence gut microbiota profile. The polypeptide is Corticoliberin (Crh) (Mus musculus (Mouse)).